Here is a 284-residue protein sequence, read N- to C-terminus: 4-diphosphocytidyl-2-C-methyl-D-erythritol kinase (284 aa).

Lysine 14 is an active-site residue. 97-107 (PMGGGLGGGSS) is a binding site for ATP. The active site involves aspartate 139.

Belongs to the GHMP kinase family. IspE subfamily.

The catalysed reaction is 4-CDP-2-C-methyl-D-erythritol + ATP = 4-CDP-2-C-methyl-D-erythritol 2-phosphate + ADP + H(+). It functions in the pathway isoprenoid biosynthesis; isopentenyl diphosphate biosynthesis via DXP pathway; isopentenyl diphosphate from 1-deoxy-D-xylulose 5-phosphate: step 3/6. Catalyzes the phosphorylation of the position 2 hydroxy group of 4-diphosphocytidyl-2C-methyl-D-erythritol. This chain is 4-diphosphocytidyl-2-C-methyl-D-erythritol kinase, found in Psychromonas ingrahamii (strain DSM 17664 / CCUG 51855 / 37).